The chain runs to 113 residues: Chaperone protein SigE (113 aa).

The protein belongs to the IpgE/SigE chaperone family. In terms of assembly, homodimer or higher-order oligomers.

It localises to the cytoplasm. In terms of biological role, molecular chaperone required for SopB/SigD stabilization and secretion. This chain is Chaperone protein SigE (sigE), found in Salmonella paratyphi A (strain ATCC 9150 / SARB42).